Consider the following 65-residue polypeptide: Large ribosomal subunit protein bL35 (65 aa).

Composition is skewed to basic residues over residues 1-11 and 21-43; these read MPKIKTRRSAA and KFKR…RKMR. The tract at residues 1 to 65 is disordered; it reads MPKIKTRRSA…KAVRRMLPNG (65 aa).

The protein belongs to the bacterial ribosomal protein bL35 family.

This Desulfovibrio desulfuricans (strain ATCC 27774 / DSM 6949 / MB) protein is Large ribosomal subunit protein bL35.